A 282-amino-acid polypeptide reads, in one-letter code: E3 ubiquitin-protein ligase Siah1 (282 aa).

A disordered region spans residues 1 to 28 (MSRQTATALPTGTSKCPPSQRVPTLSGT). Residues 41–76 (CPVCFDYVLPPILQCQSGHLVCSNCRPKLTCCPTCR) form an RING-type zinc finger. Residues 90-282 (VANSVLFPCK…LGINVTISMC (193 aa)) are SBD. An SIAH-type zinc finger spans residues 93–153 (SVLFPCKYAS…VMPHLLHQHK (61 aa)). Zn(2+) contacts are provided by Cys-98, Cys-105, His-117, Cys-121, Cys-128, Cys-135, His-147, and His-152.

The protein belongs to the SINA (Seven in absentia) family. In terms of assembly, homodimer.

The catalysed reaction is S-ubiquitinyl-[E2 ubiquitin-conjugating enzyme]-L-cysteine + [acceptor protein]-L-lysine = [E2 ubiquitin-conjugating enzyme]-L-cysteine + N(6)-ubiquitinyl-[acceptor protein]-L-lysine.. The protein operates within protein modification; protein ubiquitination. Its function is as follows. E3 ubiquitin-protein ligase that mediates ubiquitination and subsequent proteasomal degradation of target proteins. E3 ubiquitin ligases accept ubiquitin from an E2 ubiquitin-conjugating enzyme in the form of a thioester and then directly transfers the ubiquitin to targeted substrates. It probably triggers the ubiquitin-mediated degradation of different substrates. In Danio rerio (Zebrafish), this protein is E3 ubiquitin-protein ligase Siah1 (siah1).